The following is a 764-amino-acid chain: Acylamino-acid-releasing enzyme (764 aa).

Residues Ser-618, Asp-707, and His-739 each act as charge relay system in the active site.

It belongs to the peptidase S9C family. In terms of assembly, homotetramer.

It localises to the cytoplasm. The protein resides in the nucleus. It carries out the reaction Cleavage of an N-acetyl or N-formyl amino acid from the N-terminus of a polypeptide.. Strongly inhibited by the serine protease inhibitor diisopropyl fluorophosphate. In terms of biological role, catalyzes the hydrolysis of the N-terminal peptide bond of an N-acetylated peptide to generate an N-acetylated amino acid and a peptide with a free N-terminus. Can degrade the glycated RuBisCO (ribulose-1,5-bisphosphate carboxylase/oxygenase) protein but not the native protein. May be involved in the elimination of glycated proteins. Plays a homeostatic role in sustaining the cytoplasmic antioxidative system. May contribute to the elimination of the oxidized proteins in the cytoplasm. In Arabidopsis thaliana (Mouse-ear cress), this protein is Acylamino-acid-releasing enzyme.